Reading from the N-terminus, the 82-residue chain is ATP synthase subunit c (82 aa).

The next 2 helical transmembrane spans lie at 3 to 23 (PLIA…ASLG) and 57 to 77 (LAFM…LLFA).

In terms of assembly, F-type ATPases have 2 components, F(1) - the catalytic core - and F(0) - the membrane proton channel. F(1) has five subunits: alpha(3), beta(3), gamma(1), delta(1), epsilon(1). F(0) has four main subunits: a(1), b(1), b'(1) and c(10-14). The alpha and beta chains form an alternating ring which encloses part of the gamma chain. F(1) is attached to F(0) by a central stalk formed by the gamma and epsilon chains, while a peripheral stalk is formed by the delta, b and b' chains.

Its subcellular location is the cellular thylakoid membrane. Inhibited by dicyclohexylcarbodiimide. Its function is as follows. F(1)F(0) ATP synthase produces ATP from ADP in the presence of a proton or sodium gradient. F-type ATPases consist of two structural domains, F(1) containing the extramembraneous catalytic core and F(0) containing the membrane proton channel, linked together by a central stalk and a peripheral stalk. During catalysis, ATP synthesis in the catalytic domain of F(1) is coupled via a rotary mechanism of the central stalk subunits to proton translocation. Key component of the F(0) channel; it plays a direct role in translocation across the membrane. A homomeric c-ring of between 10-14 subunits forms the central stalk rotor element with the F(1) delta and epsilon subunits. Functionally, the complex from the organism is particularly stable to disruption and remains functional after 6 hrs at 55 degrees Celsius. The sequence is that of ATP synthase subunit c (atpE) from Thermosynechococcus vestitus (strain NIES-2133 / IAM M-273 / BP-1).